A 309-amino-acid chain; its full sequence is Mitochondrial import receptor subunit TOM34 (309 aa).

S8 carries the phosphoserine modification. 3 TPR repeats span residues 9 to 42, 51 to 84, and 85 to 118; these read VEQLRAAGNQNFRNGQYGEASALYERALRLLQAR, SVLYSNRAACYLKDGNCTDCIKDCTSALALVPFS, and IKPLLRRASAYEALEKYALAYVDYKTVLQIDNSV. Positions 158–189 are disordered; the sequence is WNSLPSDNHKETAKTKSKEATATKSRVPSAGD. A Phosphoserine modification is found at S160. Residues 164-178 are compositionally biased toward basic and acidic residues; the sequence is DNHKETAKTKSKEAT. S186 is modified (phosphoserine). 3 TPR repeats span residues 193-226, 227-260, and 261-294; these read AKALKEEGNDLVKKGNHKKAIEKYSESLLCSSLE, SATYSNRALCHLVLKQYKEAVKDCTEALKLDGKN, and VKAFYRRAQAYKALKDYKSSLSDISSLLQIEPRN. A Glycyl lysine isopeptide (Lys-Gly) (interchain with G-Cter in SUMO2) cross-link involves residue K197.

The protein belongs to the Tom34 family. As to quaternary structure, interacts with HSP90A, VCP, ATP6V1D, KIAA0665, AMPK, and DMAP1 through its TPR repeat. In terms of tissue distribution, isoform 1 is ubiquitously expressed while isoform 2 is expressed only in mature testicular germ cells. Isoform 1 is expressed in all testicular cells. Isoform 2 is highly expressed in early to late pachytene cells but expression is significantly decreased in round spermatid cells.

It localises to the cytoplasm. It is found in the mitochondrion outer membrane. Functionally, plays a role in the import of cytosolically synthesized preproteins into mitochondria. Binds the mature portion of precursor proteins. Interacts with cellular components, and possesses weak ATPase activity. May be a chaperone-like protein that helps to keep newly synthesized precursors in an unfolded import compatible state. This Mus musculus (Mouse) protein is Mitochondrial import receptor subunit TOM34 (Tomm34).